Reading from the N-terminus, the 231-residue chain is DNA mismatch repair protein MutH (231 aa).

This sequence belongs to the MutH family.

It localises to the cytoplasm. Its function is as follows. Sequence-specific endonuclease that cleaves unmethylated GATC sequences. It is involved in DNA mismatch repair. The sequence is that of DNA mismatch repair protein MutH from Klebsiella pneumoniae (strain 342).